A 233-amino-acid polypeptide reads, in one-letter code: Small ribosomal subunit protein uS3 (233 aa).

Residues 39–107 (VREFLKKRLG…PVHVNIEEVR (69 aa)) form the KH type-2 domain. Positions 212 to 233 (VQATPAAPEKKMRKGARNAAAN) are disordered.

Belongs to the universal ribosomal protein uS3 family. Part of the 30S ribosomal subunit. Forms a tight complex with proteins S10 and S14.

Binds the lower part of the 30S subunit head. Binds mRNA in the 70S ribosome, positioning it for translation. The protein is Small ribosomal subunit protein uS3 of Chromobacterium violaceum (strain ATCC 12472 / DSM 30191 / JCM 1249 / CCUG 213 / NBRC 12614 / NCIMB 9131 / NCTC 9757 / MK).